The sequence spans 182 residues: Oligoribonuclease (182 aa).

The region spanning L7 to L170 is the Exonuclease domain. Residue Y128 is part of the active site.

This sequence belongs to the oligoribonuclease family.

The protein localises to the cytoplasm. Its function is as follows. 3'-to-5' exoribonuclease specific for small oligoribonucleotides. The protein is Oligoribonuclease of Hahella chejuensis (strain KCTC 2396).